Here is a 334-residue protein sequence, read N- to C-terminus: N,N'-diacetyllegionaminic acid synthase (334 aa).

Residues 282–334 (SLVAKKDIKKGEIFSEGNLTTKRPANGISAMRYEEFLGKIATKNYKEDELIRE) form the AFP-like domain.

It catalyses the reaction 2,4-diacetamido-2,4,6-trideoxy-alpha-D-mannopyranose + phosphoenolpyruvate + H2O = N,N-diacetyllegionaminate + phosphate. Its function is as follows. Involved in biosynthesis of legionaminic acid (5,7-diamino-3,5,7,9-tetradeoxy-D-glycero-D-galacto-non-2-ulosonic acid)(Leg), a sialic acid-like derivative that is incorporated into flagellin via O-linkage to Ser/Thr. Catalyzes the condensation of 2,4-diacetamido-2,4,6-trideoxymannose with phosphoenolpyruvate (PEP) to give N,N'-diacetyllegionaminic acid. In Campylobacter jejuni subsp. jejuni serotype O:2 (strain ATCC 700819 / NCTC 11168), this protein is N,N'-diacetyllegionaminic acid synthase (legI).